We begin with the raw amino-acid sequence, 250 residues long: 5'-nucleotidase SurE (250 aa).

Positions 8, 9, 39, and 91 each coordinate a divalent metal cation.

It belongs to the SurE nucleotidase family. The cofactor is a divalent metal cation.

It is found in the cytoplasm. It carries out the reaction a ribonucleoside 5'-phosphate + H2O = a ribonucleoside + phosphate. In terms of biological role, nucleotidase that shows phosphatase activity on nucleoside 5'-monophosphates. This is 5'-nucleotidase SurE from Shewanella halifaxensis (strain HAW-EB4).